The primary structure comprises 188 residues: MPVTPTSLADHLLVALPSLLDATFARSVALICQHDENGAMGVLVNQPSEYTLGEVLAQMDITTGDGDLQARMVLNGGPVHPERGFVIHDDARAWDSSLIVGEGLYLTTSRDILEAMARGEGPANAVVTLGCAGWGAGQLESELSENSWLTVPADAELVFQLPLEQRWQGAASRIGVDLFRLTDYSGHV.

The protein belongs to the UPF0301 (AlgH) family.

The protein is UPF0301 protein Smal_0940 of Stenotrophomonas maltophilia (strain R551-3).